We begin with the raw amino-acid sequence, 371 residues long: 3-isopropylmalate dehydrogenase (371 aa).

Residue 77 to 90 (GPKWDDNPPHLRPE) coordinates NAD(+). Substrate-binding residues include R97, R107, R135, and D224. Mg(2+) is bound by residues D224, D248, and D252. 282-294 (GSAPDIAGMNKAN) is a binding site for NAD(+).

It belongs to the isocitrate and isopropylmalate dehydrogenases family. LeuB type 1 subfamily. In terms of assembly, homodimer. It depends on Mg(2+) as a cofactor. Mn(2+) is required as a cofactor.

Its subcellular location is the cytoplasm. It catalyses the reaction (2R,3S)-3-isopropylmalate + NAD(+) = 4-methyl-2-oxopentanoate + CO2 + NADH. It participates in amino-acid biosynthesis; L-leucine biosynthesis; L-leucine from 3-methyl-2-oxobutanoate: step 3/4. Its function is as follows. Catalyzes the oxidation of 3-carboxy-2-hydroxy-4-methylpentanoate (3-isopropylmalate) to 3-carboxy-4-methyl-2-oxopentanoate. The product decarboxylates to 4-methyl-2 oxopentanoate. This chain is 3-isopropylmalate dehydrogenase, found in Geobacillus kaustophilus (strain HTA426).